The chain runs to 500 residues: L-arabinose isomerase (500 aa).

Mn(2+) is bound by residues E306, E333, H350, and H450.

This sequence belongs to the arabinose isomerase family. As to quaternary structure, homohexamer. Requires Mn(2+) as cofactor.

The catalysed reaction is beta-L-arabinopyranose = L-ribulose. It functions in the pathway carbohydrate degradation; L-arabinose degradation via L-ribulose; D-xylulose 5-phosphate from L-arabinose (bacterial route): step 1/3. Its function is as follows. Catalyzes the conversion of L-arabinose to L-ribulose. The sequence is that of L-arabinose isomerase from Yersinia pestis (strain Pestoides F).